A 542-amino-acid chain; its full sequence is CTP synthase (542 aa).

The amidoligase domain stretch occupies residues 1 to 265 (MTRYVFITGG…DREVLALFGI (265 aa)). Serine 13 provides a ligand contact to CTP. Serine 13 contacts UTP. Residues 14-19 (SLGKGL) and aspartate 71 each bind ATP. Positions 71 and 139 each coordinate Mg(2+). CTP-binding positions include 146 to 148 (DIE), 186 to 191 (KTKPTQ), and lysine 222. UTP-binding positions include 186–191 (KTKPTQ) and lysine 222. 238–240 (RDV) lines the ATP pocket. A Glutamine amidotransferase type-1 domain is found at 291–541 (SIAIVGKYTG…IGAAVVQSRL (251 aa)). An L-glutamine-binding site is contributed by glycine 353. Cysteine 380 serves as the catalytic Nucleophile; for glutamine hydrolysis. Residues 381 to 384 (FGMQ), glutamate 404, and arginine 469 each bind L-glutamine. Residues histidine 514 and glutamate 516 contribute to the active site.

This sequence belongs to the CTP synthase family. In terms of assembly, homotetramer.

It carries out the reaction UTP + L-glutamine + ATP + H2O = CTP + L-glutamate + ADP + phosphate + 2 H(+). The enzyme catalyses L-glutamine + H2O = L-glutamate + NH4(+). The catalysed reaction is UTP + NH4(+) + ATP = CTP + ADP + phosphate + 2 H(+). It participates in pyrimidine metabolism; CTP biosynthesis via de novo pathway; CTP from UDP: step 2/2. Its activity is regulated as follows. Allosterically activated by GTP, when glutamine is the substrate; GTP has no effect on the reaction when ammonia is the substrate. The allosteric effector GTP functions by stabilizing the protein conformation that binds the tetrahedral intermediate(s) formed during glutamine hydrolysis. Inhibited by the product CTP, via allosteric rather than competitive inhibition. In terms of biological role, catalyzes the ATP-dependent amination of UTP to CTP with either L-glutamine or ammonia as the source of nitrogen. Regulates intracellular CTP levels through interactions with the four ribonucleotide triphosphates. The protein is CTP synthase of Methylobacterium nodulans (strain LMG 21967 / CNCM I-2342 / ORS 2060).